A 320-amino-acid polypeptide reads, in one-letter code: Mechanosensory protein 3 (320 aa).

LIM zinc-binding domains follow at residues 29-79 (CNCC…CSQH) and 89-145 (CAGC…CMTH). Positions 216–275 (RRGPRTTIKQNQLDVLNEMFSNTPKPSKHARAKKALETGLSMRVIQVWFQNRRSKERRLK) form a DNA-binding region, homeobox.

Its subcellular location is the nucleus. Functionally, specifies differentiation of the set of six touch receptor neurons. Binds cooperatively as a heterodimer with unc-86 to sites in the mec-3 gene promoter. This chain is Mechanosensory protein 3 (mec-3), found in Caenorhabditis remanei (Caenorhabditis vulgaris).